The following is a 1082-amino-acid chain: Inner tegument protein (1082 aa).

Positions 604-1082 are interaction with large tegument protein; the sequence is DHIECLFNVS…QQDLITPLKF (479 aa).

The protein belongs to the herpesviridae inner tegument protein family. As to quaternary structure, interacts (via C-terminus) with the large tegument protein/LTP (via N-terminus).

Its subcellular location is the virion tegument. The protein localises to the host cytoplasm. It localises to the host nucleus. It is found in the host Golgi apparatus. The protein resides in the host trans-Golgi network. Its function is as follows. Plays an essential role in cytoplasmic secondary envelopment during viral egress. Interacts with the capsid via the large tegument protein/LTP and participates in its transport to the host trans-Golgi network (TGN) where secondary envelopment occurs. Modulates tegumentation and capsid accumulation at the viral assembly complex. The polypeptide is Inner tegument protein (U30) (Homo sapiens (Human)).